The primary structure comprises 141 residues: Large ribosomal subunit protein uL11 (141 aa).

Belongs to the universal ribosomal protein uL11 family. In terms of assembly, part of the ribosomal stalk of the 50S ribosomal subunit. Interacts with L10 and the large rRNA to form the base of the stalk. L10 forms an elongated spine to which L12 dimers bind in a sequential fashion forming a multimeric L10(L12)X complex. In terms of processing, one or more lysine residues are methylated.

Its function is as follows. Forms part of the ribosomal stalk which helps the ribosome interact with GTP-bound translation factors. In Chloroflexus aurantiacus (strain ATCC 29366 / DSM 635 / J-10-fl), this protein is Large ribosomal subunit protein uL11.